Consider the following 623-residue polypeptide: MRVALGMLWLLALAWPPQARGFCPSQCSCSLHIMGDGSKARTVVCNDPDMTLPPASIPPDTSRLRLERTAIRRVPGEAFRPLGRLEQLWLPYNALSELNALMLRGLRRLRELRLPGNRLAAFPWAALRDAPKLRLLDLQANRLSAVPAEAARFLENLTFLDLSSNQLMRLPQELIVSWAHLETGIFPPGHHPRRVLGLQDNPWACDCRLYDLVHLLDGWAPNLAFIETELRCASPRSLAGVAFSQLELRKCQGPELHPGVASIRSLLGGTALLRCGATGVPGPEMSWRRANGRPLNGTVHQEVSSDGTSWTLLGLPAVSHLDSGDYICQAKNFLGASETVISLIVTEPPTSTEHSGSPGALWARTGGGGEAAAYNNKLVARHVPQIPKPAVLATGPSVPSTKEELTLEHFQMDALGELSDGRAGPSEARMVRSVKVVGDTYHSVSLVWKAPQAKNTTAFSVLYAVFGQHSMRRVIVQPGKTRVTITGLLPKTKYVACVCVQGLVPRKEQCVIFSTNEVVDAENTQQLINVVVISVAIVIALPLTLLVCCSALQKRCRKCFNKDSTEATVTYVNLERLGYSEDGLEELSRHSVSEADRLLSARSSVDFQAFGVKGGRRINEYFC.

Positions 1–21 are cleaved as a signal peptide; the sequence is MRVALGMLWLLALAWPPQARG. Residues 22–59 form the LRRNT domain; the sequence is FCPSQCSCSLHIMGDGSKARTVVCNDPDMTLPPASIPP. Residues 22–526 lie on the Lumenal side of the membrane; that stretch reads FCPSQCSCSL…EVVDAENTQQ (505 aa). LRR repeat units lie at residues 60–81, 84–105, 108–129, 132–153, and 156–177; these read DTSR…AFRP, RLEQ…MLRG, RLRE…ALRD, KLRL…AARF, and NLTF…LIVS. The N-linked (GlcNAc...) asparagine glycan is linked to asparagine 156. In terms of domain architecture, LRRCT spans 201 to 253; the sequence is NPWACDCRLYDLVHLLDGWAPNLAFIETELRCASPRSLAGVAFSQLELRKCQG. The Ig-like C2-type domain maps to 266–335; that stretch reads LLGGTALLRC…YICQAKNFLG (70 aa). A disulfide bridge links cysteine 275 with cysteine 328. Asparagine 296 and asparagine 455 each carry an N-linked (GlcNAc...) asparagine glycan. The Fibronectin type-III domain occupies 430–518; that stretch reads MVRSVKVVGD…QCVIFSTNEV (89 aa). A helical transmembrane segment spans residues 527–547; it reads LINVVVISVAIVIALPLTLLV. The Cytoplasmic segment spans residues 548–623; that stretch reads CCSALQKRCR…GGRRINEYFC (76 aa). The stretch at 571–594 is one LRR 6 repeat; the sequence is YVNLERLGYSEDGLEELSRHSVSE.

As to quaternary structure, may form a homodimer. Interacts with LRIT2; may form a heterodimer with LRIT2. Interacts (via its N-terminal extracellular domain) with metabotropic glutamate receptor GRM6. Interacts (via its extreme C-terminus) with the scaffold protein FRMPD2 (via the third PDZ domain); the interaction leads to their colocalization in photoreceptor synapses.

It localises to the endoplasmic reticulum membrane. The protein resides in the cell projection. Its subcellular location is the dendrite. In terms of biological role, photoreceptor synaptic protein essential for normal vision. Involved in synapse formation in cone photoreceptor cells. The protein is Leucine-rich repeat, immunoglobulin-like domain and transmembrane domain-containing protein 1 (LRIT1) of Homo sapiens (Human).